A 426-amino-acid chain; its full sequence is Enolase (426 aa).

Q162 contributes to the (2R)-2-phosphoglycerate binding site. E204 functions as the Proton donor in the catalytic mechanism. Mg(2+)-binding residues include D241, E288, and D315. Residues K340, R369, S370, and K391 each coordinate (2R)-2-phosphoglycerate. Catalysis depends on K340, which acts as the Proton acceptor.

Belongs to the enolase family. Mg(2+) serves as cofactor.

The protein localises to the cytoplasm. It is found in the secreted. Its subcellular location is the cell surface. The catalysed reaction is (2R)-2-phosphoglycerate = phosphoenolpyruvate + H2O. It participates in carbohydrate degradation; glycolysis; pyruvate from D-glyceraldehyde 3-phosphate: step 4/5. Functionally, catalyzes the reversible conversion of 2-phosphoglycerate (2-PG) into phosphoenolpyruvate (PEP). It is essential for the degradation of carbohydrates via glycolysis. This Bacteroides thetaiotaomicron (strain ATCC 29148 / DSM 2079 / JCM 5827 / CCUG 10774 / NCTC 10582 / VPI-5482 / E50) protein is Enolase.